Reading from the N-terminus, the 279-residue chain is Lyso-glycine lipid O-acyltransferase (279 aa).

It belongs to the O-acyltransferase GlsA family.

The catalysed reaction is a lyso-glycine lipid + a fatty acyl-[ACP] = a glycine lipid + holo-[ACP]. It carries out the reaction N-[(3R)-3-hydroxyhexadecanoyl]-glycine + hexadecanoyl-[ACP] = N-[(3R)-3-(hexadecanoyloxy)hexadecanoyl]-glycine + holo-[ACP]. It functions in the pathway lipid metabolism. Is involved in the production of glycine lipids (GL), which are phosphorus-free membrane lipids. Catalyzes the second step of GL biosynthesis, i.e. the O-acylation of the hydroxyl group of lyso-glycine lipids, resulting in the production of the mature diacylated glycine lipids. In Phocaeicola vulgatus (strain ATCC 8482 / DSM 1447 / JCM 5826 / CCUG 4940 / NBRC 14291 / NCTC 11154) (Bacteroides vulgatus), this protein is Lyso-glycine lipid O-acyltransferase.